The sequence spans 312 residues: Lipid-translocating exporter-like protein RTA1 (312 aa).

The disordered stretch occupies residues 1-21 (MSPESKKITAHGSTSMPLSRT). Over residues 11–21 (HGSTSMPLSRT) the composition is skewed to polar residues. Helical transmembrane passes span 29 to 49 (IPLT…FFLA), 61 to 81 (LSTM…YFIC), 103 to 123 (FITF…LLAG), 142 to 162 (AMIT…SFHV), 183 to 203 (FMMV…RSAY), and 223 to 243 (SLML…ILPI). Residues Asn-258 and Asn-304 are each glycosylated (N-linked (GlcNAc...) asparagine).

This sequence belongs to the lipid-translocating exporter (LTE) (TC 9.A.26.1) family.

The protein resides in the membrane. The protein operates within siderophore biosynthesis. In terms of biological role, lipid-translocating exporter-like protein; part of the gene cluster that mediates the biosynthesis of hydroxamate-containing siderophores that play a critical role in virulence via intracellular iron acquisition during macrophage infection. The sequence is that of Lipid-translocating exporter-like protein RTA1 from Ajellomyces capsulatus (Darling's disease fungus).